The primary structure comprises 310 residues: Mitochondrial citrate transporter E (310 aa).

3 Solcar repeats span residues 2–95 (STTT…LRQG), 107–199 (QSLG…AKRR), and 208–293 (DGPG…TNKI). Helical transmembrane passes span 8-28 (FIAG…FETV), 72-92 (GSAY…YEPL), 114-133 (LAGA…FFLV), 178-198 (AMVR…FAKR), 211-228 (GLHL…CCVM), and 265-286 (IYKG…TLSL).

This sequence belongs to the mitochondrial carrier (TC 2.A.29) family.

Its subcellular location is the mitochondrion inner membrane. Its function is as follows. Mitochondrial transporter that does not mediate citrate export from mitochondria to cytoplasm. Its exact function has still to be determined. This Aspergillus niger (strain ATCC 1015 / CBS 113.46 / FGSC A1144 / LSHB Ac4 / NCTC 3858a / NRRL 328 / USDA 3528.7) protein is Mitochondrial citrate transporter E.